We begin with the raw amino-acid sequence, 323 residues long: tRNA-modifying protein YgfZ (323 aa).

Residues Trp29 and Trp182 each contribute to the folate site.

Belongs to the tRNA-modifying YgfZ family.

It is found in the cytoplasm. Functionally, folate-binding protein involved in regulating the level of ATP-DnaA and in the modification of some tRNAs. It is probably a key factor in regulatory networks that act via tRNA modification, such as initiation of chromosomal replication. The chain is tRNA-modifying protein YgfZ from Vibrio cholerae serotype O1 (strain ATCC 39541 / Classical Ogawa 395 / O395).